The primary structure comprises 291 residues: ATP phosphoribosyltransferase 1 (291 aa).

It belongs to the ATP phosphoribosyltransferase family. Long subfamily. The cofactor is Mg(2+).

It is found in the cytoplasm. It carries out the reaction 1-(5-phospho-beta-D-ribosyl)-ATP + diphosphate = 5-phospho-alpha-D-ribose 1-diphosphate + ATP. It participates in amino-acid biosynthesis; L-histidine biosynthesis; L-histidine from 5-phospho-alpha-D-ribose 1-diphosphate: step 1/9. Feedback inhibited by histidine. Catalyzes the condensation of ATP and 5-phosphoribose 1-diphosphate to form N'-(5'-phosphoribosyl)-ATP (PR-ATP). Has a crucial role in the pathway because the rate of histidine biosynthesis seems to be controlled primarily by regulation of HisG enzymatic activity. This chain is ATP phosphoribosyltransferase 1, found in Geobacter sulfurreducens (strain ATCC 51573 / DSM 12127 / PCA).